A 311-amino-acid polypeptide reads, in one-letter code: 1D-myo-inositol 2-acetamido-2-deoxy-alpha-D-glucopyranoside deacetylase (311 aa).

3 residues coordinate Zn(2+): H29, D32, and H162.

The protein belongs to the MshB deacetylase family. Zn(2+) serves as cofactor.

It carries out the reaction 1D-myo-inositol 2-acetamido-2-deoxy-alpha-D-glucopyranoside + H2O = 1D-myo-inositol 2-amino-2-deoxy-alpha-D-glucopyranoside + acetate. Its function is as follows. Catalyzes the deacetylation of 1D-myo-inositol 2-acetamido-2-deoxy-alpha-D-glucopyranoside (GlcNAc-Ins) in the mycothiol biosynthesis pathway. In Corynebacterium efficiens (strain DSM 44549 / YS-314 / AJ 12310 / JCM 11189 / NBRC 100395), this protein is 1D-myo-inositol 2-acetamido-2-deoxy-alpha-D-glucopyranoside deacetylase.